Here is a 215-residue protein sequence, read N- to C-terminus: DNA repair and recombination protein RadB (215 aa).

The protein belongs to the eukaryotic RecA-like protein family. RadB subfamily.

Involved in DNA repair and in homologous recombination. May regulate the cleavage reactions of the branch-structured DNA. Has a very weak ATPase activity that is not stimulated by DNA. Binds DNA but does not promote DNA strands exchange. This Methanococcus maripaludis (strain C7 / ATCC BAA-1331) protein is DNA repair and recombination protein RadB.